The chain runs to 599 residues: Adenine deaminase (599 aa).

A disordered region spans residues 1–31 (MARSNRRGGRGDPEDDPAWAPPGHRCAGERA).

Belongs to the metallo-dependent hydrolases superfamily. Adenine deaminase family. Mn(2+) is required as a cofactor.

It catalyses the reaction adenine + H2O + H(+) = hypoxanthine + NH4(+). The sequence is that of Adenine deaminase from Methanopyrus kandleri (strain AV19 / DSM 6324 / JCM 9639 / NBRC 100938).